Consider the following 402-residue polypeptide: Glutamate N-acetyltransferase (402 aa).

Positions 151, 178, 189, 267, 397, and 402 each coordinate substrate. Thr-189 serves as the catalytic Nucleophile.

This sequence belongs to the ArgJ family. In terms of assembly, heterotetramer of two alpha and two beta chains.

It is found in the cytoplasm. The enzyme catalyses N(2)-acetyl-L-ornithine + L-glutamate = N-acetyl-L-glutamate + L-ornithine. Its pathway is amino-acid biosynthesis; L-arginine biosynthesis; L-ornithine and N-acetyl-L-glutamate from L-glutamate and N(2)-acetyl-L-ornithine (cyclic): step 1/1. In terms of biological role, catalyzes the transfer of the acetyl group from N(2)-acetylornithine to glutamate, forming N-acetylglutamate and L-ornithine. The sequence is that of Glutamate N-acetyltransferase from Methanothermobacter thermautotrophicus (strain ATCC 29096 / DSM 1053 / JCM 10044 / NBRC 100330 / Delta H) (Methanobacterium thermoautotrophicum).